Consider the following 2506-residue polypeptide: Highly reducing polyketide synthase rstn3 (2506 aa).

Positions 8-436 constitute a Ketosynthase family 3 (KS3) domain; sequence VEPIAIVGMA…GANAHAILDA (429 aa). Residues Cys183, His318, and His358 each act as for beta-ketoacyl synthase activity in the active site. The Malonyl-CoA:ACP transacylase (MAT) domain occupies 547–875; it reads FIFTGQGAQW…KMVGSLFLSG (329 aa). Residues 941–1050 form an N-terminal hotdog fold region; that stretch reads HDLLGSRLPG…ASDQSISSVE (110 aa). Residues 941-1212 enclose the PKS/mFAS DH domain; the sequence is HDLLGSRLPG…FSSLETAVGE (272 aa). His973 acts as the Proton acceptor; for dehydratase activity in catalysis. The segment at 1060–1212 is C-terminal hotdog fold; the sequence is NKDSYDRRWY…FSSLETAVGE (153 aa). Catalysis depends on Asp1125, which acts as the Proton donor; for dehydratase activity. The methyltransferase (CMet) domain stretch occupies residues 1263–1563; it reads VTRLAIRSSA…SGADIVLDDY (301 aa). The Enoyl reductase (ER) domain occupies 1827–2093; the sequence is GRVDSFYFKE…QDDYVGRVVL (267 aa). The Ketoreductase (KR) domain occupies 2116–2296; sequence ASYLLIGCLG…QATSIALGMI (181 aa). The 79-residue stretch at 2423-2501 folds into the Carrier domain; the sequence is AVKVTTLGLI…DLAEKVVALA (79 aa). O-(pantetheine 4'-phosphoryl)serine is present on Ser2460.

It depends on pantetheine 4'-phosphate as a cofactor.

It functions in the pathway antifungal biosynthesis. Functionally, highly reducing polyketide synthase; part of the gene cluster that mediates the biosynthesis of the tetrahydropyranyl antifungal agent restricticin that acts as an inhibitor of CYP51 and blocks the ergosterol biosynthesis. The highly reducing polyketide synthase rstn3, the short chain dehydrogenase rstn4, the cyclase rstn5, the FAD-dependent monooxygenase rstn6 and the enoylreductase rstn7 are required to generate the first stable intermediate desmethylrestrictinol. Rstn3 with rstn7 biosynthesize the first polyketide chain intermediate that is reduced by rstn4, followed by epoxidation by rstn6 before 6-endo cyclization via epoxide opening by rstn5 leads to desmethylrestrictinol. The methyltransferase rstn1 then catalyzes the C4 O-methylation of desmethylrestrictinol to produce restrictinol, and the nonribosomal peptide synthetase rstn8 catalyzes the C3 esterification of restrictinol with glycine that leads to restricticin. In Aspergillus nomiae NRRL (strain ATCC 15546 / NRRL 13137 / CBS 260.88 / M93), this protein is Highly reducing polyketide synthase rstn3.